The sequence spans 281 residues: Diaminopimelate epimerase (281 aa).

Substrate-binding residues include Asn14 and Asn65. Catalysis depends on Cys74, which acts as the Proton donor. Substrate is bound by residues Gly75–Asn76, Asn165, Asn198, and Glu216–Arg217. The active-site Proton acceptor is the Cys225. A substrate-binding site is contributed by Gly226–Thr227.

This sequence belongs to the diaminopimelate epimerase family. As to quaternary structure, homodimer.

The protein localises to the cytoplasm. It carries out the reaction (2S,6S)-2,6-diaminopimelate = meso-2,6-diaminopimelate. Its pathway is amino-acid biosynthesis; L-lysine biosynthesis via DAP pathway; DL-2,6-diaminopimelate from LL-2,6-diaminopimelate: step 1/1. Its function is as follows. Catalyzes the stereoinversion of LL-2,6-diaminopimelate (L,L-DAP) to meso-diaminopimelate (meso-DAP), a precursor of L-lysine and an essential component of the bacterial peptidoglycan. In Leptospira interrogans serogroup Icterohaemorrhagiae serovar copenhageni (strain Fiocruz L1-130), this protein is Diaminopimelate epimerase.